The sequence spans 447 residues: N-succinylarginine dihydrolase (447 aa).

Substrate contacts are provided by residues 19–28 (AGLSFGNEAS), asparagine 110, and 137–138 (HR). Glutamate 174 is an active-site residue. Position 214 (arginine 214) interacts with substrate. The active site involves histidine 250. Positions 252 and 365 each coordinate substrate. Cysteine 371 (nucleophile) is an active-site residue.

This sequence belongs to the succinylarginine dihydrolase family. In terms of assembly, homodimer.

It carries out the reaction N(2)-succinyl-L-arginine + 2 H2O + 2 H(+) = N(2)-succinyl-L-ornithine + 2 NH4(+) + CO2. It functions in the pathway amino-acid degradation; L-arginine degradation via AST pathway; L-glutamate and succinate from L-arginine: step 2/5. Catalyzes the hydrolysis of N(2)-succinylarginine into N(2)-succinylornithine, ammonia and CO(2). This is N-succinylarginine dihydrolase from Acinetobacter baumannii (strain ACICU).